The sequence spans 394 residues: Cytochrome b561 and DOMON domain-containing protein At4g12980 (394 aa).

Positions methionine 1–serine 24 are cleaved as a signal peptide. Residues leucine 49–glycine 169 form the DOMON domain. The region spanning glycine 184–leucine 381 is the Cytochrome b561 domain. A run of 2 helical transmembrane segments spans residues isoleucine 220 to alanine 240 and alanine 252 to tryptophan 272. Histidine 221, histidine 257, and histidine 290 together coordinate heme b. Residues asparagine 292–proline 312 form a helical membrane-spanning segment. A heme b-binding site is contributed by histidine 326. Helical transmembrane passes span glycine 328–leucine 348 and valine 361–leucine 381.

Requires heme b as cofactor.

The protein localises to the membrane. In terms of biological role, may act as a catecholamine-responsive trans-membrane electron transporter. This Arabidopsis thaliana (Mouse-ear cress) protein is Cytochrome b561 and DOMON domain-containing protein At4g12980.